Consider the following 529-residue polypeptide: uncharacterized protein (529 aa).

Residues Met-1–Ala-20 form the signal peptide.

This is an uncharacterized protein from Orgyia pseudotsugata multicapsid polyhedrosis virus (OpMNPV).